Here is a 78-residue protein sequence, read N- to C-terminus: Gas vesicle protein A (78 aa).

This sequence belongs to the gas vesicle GvpA family. The gas vesicle shell is 2 nm thick and consists of a single layer of this protein. It forms helical ribs nearly perpendicular to the long axis of the vesicle.

Its subcellular location is the gas vesicle shell. Gas vesicles are hollow, gas filled proteinaceous nanostructures found in some microorganisms. During planktonic growth they allow positioning of the organism at a favorable depth for light or nutrient acquisition. GvpA forms the protein shell. The sequence is that of Gas vesicle protein A from Halorubrum vacuolatum (Natronobacterium vacuolatum).